Reading from the N-terminus, the 105-residue chain is U-scoloptoxin(05)-Sa2a (105 aa).

A signal peptide spans 1-24 (MKEAVKMSCLCIFLFLFLFSLTDA). Residues 79 to 105 (HVPESNQKDGKVSTHMSSCNTDGCNAN) are disordered. A compositionally biased stretch (polar residues) spans 92-105 (THMSSCNTDGCNAN).

The protein belongs to the scoloptoxin-05 family. Contains 4 disulfide bonds. Expressed by the venom gland.

The protein resides in the secreted. The chain is U-scoloptoxin(05)-Sa2a from Scolopendra alternans (Florida Keys giant centipede).